The sequence spans 364 residues: Paraneoplastic antigen Ma2 homolog (364 aa).

An N-acetylalanine modification is found at alanine 2. Positions glutamate 335 to aspartate 353 are enriched in acidic residues. Residues glutamate 335–aspartate 364 form a disordered region.

The protein belongs to the PNMA family.

The protein resides in the nucleus. Its subcellular location is the nucleolus. The polypeptide is Paraneoplastic antigen Ma2 homolog (PNMA2) (Pongo abelii (Sumatran orangutan)).